Reading from the N-terminus, the 165-residue chain is uncharacterized protein (165 aa).

An RCK C-terminal domain is found at 76–161 (LEQVESALDD…LKRLIREKLT (86 aa)).

This is an uncharacterized protein from Bacillus subtilis (strain 168).